The chain runs to 789 residues: Ribonucleoside-diphosphate reductase large subunit (789 aa).

Substrate contacts are provided by residues Thr-207, 222–223 (SC), Gly-253, 435–439 (NLCTE), and 620–624 (PTVSS). A disulfide bridge connects residues Cys-223 and Cys-452. The Proton acceptor role is filled by Asn-435. The Cysteine radical intermediate role is filled by Cys-437. Glu-439 (proton acceptor) is an active-site residue.

Belongs to the ribonucleoside diphosphate reductase large chain family. As to quaternary structure, heterotetramer composed of a homodimer of the large subunit (R1) and a homodimer of the small subunit (R2). Larger multisubunit protein complex are also active, composed of (R1)n(R2)n.

The enzyme catalyses a 2'-deoxyribonucleoside 5'-diphosphate + [thioredoxin]-disulfide + H2O = a ribonucleoside 5'-diphosphate + [thioredoxin]-dithiol. Ribonucleoside-diphosphate reductase holoenzyme provides the precursors necessary for viral DNA synthesis. Allows virus growth in non-dividing cells, as well as reactivation from latency in infected hosts. Catalyzes the biosynthesis of deoxyribonucleotides from the corresponding ribonucleotides. The chain is Ribonucleoside-diphosphate reductase large subunit from Equus caballus (Horse).